Here is a 455-residue protein sequence, read N- to C-terminus: Transmembrane protease serine 5 (455 aa).

Residues 1–49 (MSPTLDDQSPMEIRCTEEGAGPGIFRMELGDQRQSISQSQRWCCLQRGC) are Cytoplasmic-facing. Residues 50–70 (VILGVLGLLAGAGIASWLLVL) form a helical; Signal-anchor for type II membrane protein membrane-spanning segment. Topologically, residues 71 to 455 (YLWPAASPSI…DWIHDTVQVR (385 aa)) are extracellular. In terms of domain architecture, SRCR spans 112-207 (FRINGEDLLL…SGRIVSLKCS (96 aa)). 7 cysteine pairs are disulfide-bonded: Cys135-Cys196, Cys148-Cys206, Cys209-Cys328, Cys243-Cys259, Cys342-Cys411, Cys374-Cys390, and Cys401-Cys429. N-linked (GlcNAc...) asparagine glycans are attached at residues Asn163 and Asn170. Residues 218 to 453 (IVGGQAVASG…FLDWIHDTVQ (236 aa)) form the Peptidase S1 domain. Active-site charge relay system residues include His258 and Asp308. Asn319 and Asn375 each carry an N-linked (GlcNAc...) asparagine glycan. Ser405 functions as the Charge relay system in the catalytic mechanism.

It belongs to the peptidase S1 family.

It is found in the cell membrane. Functionally, may play a role in hearing. The protein is Transmembrane protease serine 5 (Tmprss5) of Mus musculus (Mouse).